A 343-amino-acid chain; its full sequence is Nuclease EXOG, mitochondrial (343 aa).

Histidine 121 serves as the catalytic Proton acceptor. Asparagine 152 is an a divalent metal cation binding site.

It belongs to the DNA/RNA non-specific endonuclease family. As to quaternary structure, homodimer. A divalent metal cation serves as cofactor.

It localises to the mitochondrion inner membrane. Endo/exonuclease with nicking activity towards supercoiled DNA, a preference for single-stranded DNA and 5'-3' exonuclease activity. In Danio rerio (Zebrafish), this protein is Nuclease EXOG, mitochondrial (exog).